The sequence spans 371 residues: Aspartate-semialdehyde dehydrogenase (371 aa).

Residues R9–V12, T37–S38, and Q73 each bind NADP(+). Phosphate is bound at residue R102. Residue C135 is the Acyl-thioester intermediate of the active site. Q162 serves as a coordination point for substrate. Residues S165–G166 and P193 each bind NADP(+). E241 lines the substrate pocket. K244 provides a ligand contact to phosphate. R268 serves as a coordination point for substrate. The Proton acceptor role is filled by H275. Residue Q351 participates in NADP(+) binding.

This sequence belongs to the aspartate-semialdehyde dehydrogenase family. Homodimer.

The enzyme catalyses L-aspartate 4-semialdehyde + phosphate + NADP(+) = 4-phospho-L-aspartate + NADPH + H(+). The protein operates within amino-acid biosynthesis; L-lysine biosynthesis via DAP pathway; (S)-tetrahydrodipicolinate from L-aspartate: step 2/4. It participates in amino-acid biosynthesis; L-methionine biosynthesis via de novo pathway; L-homoserine from L-aspartate: step 2/3. Its pathway is amino-acid biosynthesis; L-threonine biosynthesis; L-threonine from L-aspartate: step 2/5. Its function is as follows. Catalyzes the NADPH-dependent formation of L-aspartate-semialdehyde (L-ASA) by the reductive dephosphorylation of L-aspartyl-4-phosphate. The chain is Aspartate-semialdehyde dehydrogenase from Neisseria meningitidis serogroup A / serotype 4A (strain DSM 15465 / Z2491).